Consider the following 176-residue polypeptide: MDLPGPIHDFLLVFLGSGIILGGLGVVLLTNPIFSAFSLGLVLFCISLFHIPSNSHFVAAAQLLIYVGAINVLIIFAVMFTNGSEYYNDFHVWTVGDGVTSLVCTSIFVSLITTILDTSWYGIIWTTRSNQIIEQDLISNGQQIGIHLSTDFFLPFELVSIILLVALIGAIAMARQ.

5 helical membrane-spanning segments follow: residues 10 to 30 (FLLV…VLLT), 32 to 52 (PIFS…FHIP), 60 to 80 (AAQL…AVMF), 107 to 127 (IFVS…IWTT), and 152 to 172 (FFLP…GAIA).

It belongs to the complex I subunit 6 family. NDH is composed of at least 16 different subunits, 5 of which are encoded in the nucleus.

The protein resides in the plastid. It is found in the chloroplast thylakoid membrane. It catalyses the reaction a plastoquinone + NADH + (n+1) H(+)(in) = a plastoquinol + NAD(+) + n H(+)(out). The enzyme catalyses a plastoquinone + NADPH + (n+1) H(+)(in) = a plastoquinol + NADP(+) + n H(+)(out). NDH shuttles electrons from NAD(P)H:plastoquinone, via FMN and iron-sulfur (Fe-S) centers, to quinones in the photosynthetic chain and possibly in a chloroplast respiratory chain. The immediate electron acceptor for the enzyme in this species is believed to be plastoquinone. Couples the redox reaction to proton translocation, and thus conserves the redox energy in a proton gradient. In Buxus microphylla (Littleleaf boxwood), this protein is NAD(P)H-quinone oxidoreductase subunit 6, chloroplastic (ndhG).